A 122-amino-acid polypeptide reads, in one-letter code: Large ribosomal subunit protein uL14 (122 aa).

This sequence belongs to the universal ribosomal protein uL14 family. In terms of assembly, part of the 50S ribosomal subunit. Forms a cluster with proteins L3 and L19. In the 70S ribosome, L14 and L19 interact and together make contacts with the 16S rRNA in bridges B5 and B8.

Its function is as follows. Binds to 23S rRNA. Forms part of two intersubunit bridges in the 70S ribosome. The chain is Large ribosomal subunit protein uL14 from Campylobacter concisus (strain 13826).